We begin with the raw amino-acid sequence, 161 residues long: Ribosomal RNA large subunit methyltransferase H (161 aa).

S-adenosyl-L-methionine-binding positions include leucine 78, glycine 110, and 129 to 134 (LSRLTF).

This sequence belongs to the RNA methyltransferase RlmH family. As to quaternary structure, homodimer.

It localises to the cytoplasm. The catalysed reaction is pseudouridine(1915) in 23S rRNA + S-adenosyl-L-methionine = N(3)-methylpseudouridine(1915) in 23S rRNA + S-adenosyl-L-homocysteine + H(+). In terms of biological role, specifically methylates the pseudouridine at position 1915 (m3Psi1915) in 23S rRNA. This is Ribosomal RNA large subunit methyltransferase H from Heliobacterium modesticaldum (strain ATCC 51547 / Ice1).